A 122-amino-acid chain; its full sequence is Large ribosomal subunit protein bL12 (122 aa).

It belongs to the bacterial ribosomal protein bL12 family. In terms of assembly, homodimer. Part of the ribosomal stalk of the 50S ribosomal subunit. Forms a multimeric L10(L12)X complex, where L10 forms an elongated spine to which 2 to 4 L12 dimers bind in a sequential fashion. Binds GTP-bound translation factors.

In terms of biological role, forms part of the ribosomal stalk which helps the ribosome interact with GTP-bound translation factors. Is thus essential for accurate translation. This chain is Large ribosomal subunit protein bL12, found in Levilactobacillus brevis (strain ATCC 367 / BCRC 12310 / CIP 105137 / JCM 1170 / LMG 11437 / NCIMB 947 / NCTC 947) (Lactobacillus brevis).